Consider the following 559-residue polypeptide: CTP synthase (559 aa).

The tract at residues 1–283 (MSTSRTTTNN…DTFLIRRLDL (283 aa)) is amidoligase domain. Serine 25 contributes to the CTP binding site. Serine 25 contacts UTP. Residues 26–31 (SLGKGL) and aspartate 83 each bind ATP. 2 residues coordinate Mg(2+): aspartate 83 and glutamate 157. Residues 164-166 (DIE), 204-209 (KTKPTQ), and lysine 240 contribute to the CTP site. UTP-binding positions include 204 to 209 (KTKPTQ) and lysine 240. Residues 308–557 (TVGIVGKYVD…VAAALAAAVT (250 aa)) enclose the Glutamine amidotransferase type-1 domain. Glycine 371 is an L-glutamine binding site. The Nucleophile; for glutamine hydrolysis role is filled by cysteine 398. Residues 399–402 (LGLQ), glutamate 421, and arginine 482 each bind L-glutamine. Catalysis depends on residues histidine 530 and glutamate 532.

It belongs to the CTP synthase family. Homotetramer.

It carries out the reaction UTP + L-glutamine + ATP + H2O = CTP + L-glutamate + ADP + phosphate + 2 H(+). The catalysed reaction is L-glutamine + H2O = L-glutamate + NH4(+). It catalyses the reaction UTP + NH4(+) + ATP = CTP + ADP + phosphate + 2 H(+). Its pathway is pyrimidine metabolism; CTP biosynthesis via de novo pathway; CTP from UDP: step 2/2. With respect to regulation, allosterically activated by GTP, when glutamine is the substrate; GTP has no effect on the reaction when ammonia is the substrate. The allosteric effector GTP functions by stabilizing the protein conformation that binds the tetrahedral intermediate(s) formed during glutamine hydrolysis. Inhibited by the product CTP, via allosteric rather than competitive inhibition. Its function is as follows. Catalyzes the ATP-dependent amination of UTP to CTP with either L-glutamine or ammonia as the source of nitrogen. Regulates intracellular CTP levels through interactions with the four ribonucleotide triphosphates. The polypeptide is CTP synthase (Corynebacterium efficiens (strain DSM 44549 / YS-314 / AJ 12310 / JCM 11189 / NBRC 100395)).